We begin with the raw amino-acid sequence, 213 residues long: 3-isopropylmalate dehydratase small subunit (213 aa).

It belongs to the LeuD family. LeuD type 1 subfamily. Heterodimer of LeuC and LeuD.

The catalysed reaction is (2R,3S)-3-isopropylmalate = (2S)-2-isopropylmalate. It functions in the pathway amino-acid biosynthesis; L-leucine biosynthesis; L-leucine from 3-methyl-2-oxobutanoate: step 2/4. Functionally, catalyzes the isomerization between 2-isopropylmalate and 3-isopropylmalate, via the formation of 2-isopropylmaleate. The sequence is that of 3-isopropylmalate dehydratase small subunit from Magnetococcus marinus (strain ATCC BAA-1437 / JCM 17883 / MC-1).